A 372-amino-acid chain; its full sequence is Glutamate 5-kinase (372 aa).

Lys14 serves as a coordination point for ATP. Positions 54, 141, and 153 each coordinate substrate. 173–174 (TD) serves as a coordination point for ATP. Positions 280–358 (RGTLVLDAGA…DAIEKLLGYV (79 aa)) constitute a PUA domain.

This sequence belongs to the glutamate 5-kinase family.

The protein localises to the cytoplasm. The catalysed reaction is L-glutamate + ATP = L-glutamyl 5-phosphate + ADP. The protein operates within amino-acid biosynthesis; L-proline biosynthesis; L-glutamate 5-semialdehyde from L-glutamate: step 1/2. Its function is as follows. Catalyzes the transfer of a phosphate group to glutamate to form L-glutamate 5-phosphate. The protein is Glutamate 5-kinase of Ectopseudomonas mendocina (strain ymp) (Pseudomonas mendocina).